Reading from the N-terminus, the 754-residue chain is Lysyl oxidase homolog 3 (754 aa).

The signal sequence occupies residues M1–G26. 4 consecutive SRCR domains span residues F45–K146, V170–V283, V308–N408, and I418–S526. 17 cysteine pairs are disulfide-bonded: C71–C135, C84–C145, C115–C125, C202–C272, C215–C282, C249–C259, C333–C397, C346–C407, C377–C387, C447–C512, C460–C525, C493–C503, C555–C561, C607–C655, C639–C645, C667–C677, and C714–C728. A glycan (N-linked (GlcNAc...) asparagine) is linked at N112. N-linked (GlcNAc...) asparagine glycosylation is present at N267. N391 and N482 each carry an N-linked (GlcNAc...) asparagine glycan. Residues S530–A733 form a lysyl-oxidase like region. The Cu cation site is built by H608, H610, and H612. N626 is a glycosylation site (N-linked (GlcNAc...) asparagine). The lysine tyrosylquinone (Lys-Tyr) cross-link spans K635–Y671. Y671 is modified (2',4',5'-topaquinone).

This sequence belongs to the lysyl oxidase family. It depends on Cu cation as a cofactor. Lysine tyrosylquinone residue serves as cofactor. Post-translationally, the lysine tyrosylquinone cross-link (LTQ) is generated by condensation of the epsilon-amino group of a lysine with a topaquinone produced by oxidation of tyrosine. As to expression, expressed in palate: predominantly present in the palate mesenchyme and tongue (at protein level). In spine, expressed in the original intervertebral disk, cartilage primordia, anterior and posterior longitudinal ligaments, meninges of spinal cord, lung and heart. In eyes, strongly expressed in the skin of the eyelid and weakly expressed in the cornea and sclera. In lung, predominantly expressed in the pulmonary mesenchyme. In developing muscle, expressed at myofiber ends (at protein level).

It is found in the secreted. The protein resides in the extracellular space. Its subcellular location is the cytoplasm. It localises to the nucleus. It carries out the reaction L-lysyl-[protein] + O2 + H2O = (S)-2-amino-6-oxohexanoyl-[protein] + H2O2 + NH4(+). The enzyme catalyses N(6)-acetyl-L-lysyl-[protein] + O2 + H2O = acetamide + (S)-2-amino-6-oxohexanoyl-[protein] + H2O2. Its function is as follows. Protein-lysine 6-oxidase that mediates the oxidation of peptidyl lysine residues to allysine in target proteins. Catalyzes the post-translational oxidative deamination of peptidyl lysine residues in precursors of elastin and different types of collagens, a prerequisite in the formation of cross-links between collagens and elastin. Required for somite boundary formation by catalyzing oxidation of fibronectin (FN1), enhancing integrin signaling in myofibers and their adhesion to the myotendinous junction (MTJ). Acts as a regulator of inflammatory response by inhibiting differentiation of naive CD4(+) T-cells into T-helper Th17 or regulatory T-cells (Treg): acts by interacting with STAT3 in the nucleus and catalyzing both deacetylation and oxidation of lysine residues on STAT3, leading to disrupt STAT3 dimerization and inhibit STAT3 transcription activity. Oxidation of lysine residues to allysine on STAT3 preferentially takes place on lysine residues that are acetylated. Also able to catalyze deacetylation of lysine residues on STAT3. This Mus musculus (Mouse) protein is Lysyl oxidase homolog 3.